Here is a 205-residue protein sequence, read N- to C-terminus: uncharacterized protein (205 aa).

This sequence belongs to the flavoredoxin family. FMN is required as a cofactor.

This is an uncharacterized protein from Bacillus subtilis (strain 168).